The chain runs to 97 residues: Small ribosomal subunit protein bS6 (97 aa).

The protein belongs to the bacterial ribosomal protein bS6 family.

In terms of biological role, binds together with bS18 to 16S ribosomal RNA. The chain is Small ribosomal subunit protein bS6 from Syntrophomonas wolfei subsp. wolfei (strain DSM 2245B / Goettingen).